A 202-amino-acid polypeptide reads, in one-letter code: Holliday junction branch migration complex subunit RuvA (202 aa).

A domain I region spans residues 1–64 (MFAYIRGRLE…EDVISLYGFL (64 aa)). The interval 65–143 (TQEELNVFEL…KEQLTEYAQS (79 aa)) is domain II. Residues 144–152 (EEGGKVLDT) form a flexible linker region. Residues 152–202 (TDSSKMAEAVSALMVLGYSPAEANKAVSAVYREDMDIETIIKNALKGLARP) form a domain III region.

It belongs to the RuvA family. In terms of assembly, homotetramer. Forms an RuvA(8)-RuvB(12)-Holliday junction (HJ) complex. HJ DNA is sandwiched between 2 RuvA tetramers; dsDNA enters through RuvA and exits via RuvB. An RuvB hexamer assembles on each DNA strand where it exits the tetramer. Each RuvB hexamer is contacted by two RuvA subunits (via domain III) on 2 adjacent RuvB subunits; this complex drives branch migration. In the full resolvosome a probable DNA-RuvA(4)-RuvB(12)-RuvC(2) complex forms which resolves the HJ.

It localises to the cytoplasm. Its function is as follows. The RuvA-RuvB-RuvC complex processes Holliday junction (HJ) DNA during genetic recombination and DNA repair, while the RuvA-RuvB complex plays an important role in the rescue of blocked DNA replication forks via replication fork reversal (RFR). RuvA specifically binds to HJ cruciform DNA, conferring on it an open structure. The RuvB hexamer acts as an ATP-dependent pump, pulling dsDNA into and through the RuvAB complex. HJ branch migration allows RuvC to scan DNA until it finds its consensus sequence, where it cleaves and resolves the cruciform DNA. This Acetivibrio thermocellus (strain ATCC 27405 / DSM 1237 / JCM 9322 / NBRC 103400 / NCIMB 10682 / NRRL B-4536 / VPI 7372) (Clostridium thermocellum) protein is Holliday junction branch migration complex subunit RuvA.